Here is a 290-residue protein sequence, read N- to C-terminus: 33 kDa chaperonin (290 aa).

2 disulfides stabilise this stretch: Cys235/Cys237 and Cys268/Cys271.

This sequence belongs to the HSP33 family. In terms of processing, under oxidizing conditions two disulfide bonds are formed involving the reactive cysteines. Under reducing conditions zinc is bound to the reactive cysteines and the protein is inactive.

The protein localises to the cytoplasm. Its function is as follows. Redox regulated molecular chaperone. Protects both thermally unfolding and oxidatively damaged proteins from irreversible aggregation. Plays an important role in the bacterial defense system toward oxidative stress. This is 33 kDa chaperonin from Streptococcus pneumoniae (strain CGSP14).